The following is a 1102-amino-acid chain: Probable leucine-rich repeat receptor-like protein kinase At5g63930 (1102 aa).

A signal peptide spans 1-26 (MVKEMMKLAVFFISLLLILLISETTG). The Extracellular segment spans residues 27–737 (LNLEGQYLLE…GKPGGMRSSK (711 aa)). N-linked (GlcNAc...) asparagine glycosylation is found at Asn54, Asn68, Asn79, and Asn119. 26 LRR repeats span residues 72-96 (DPEV…IGGL), 97-120 (VHLK…IGNC), 122-144 (SLEI…IGKL), 145-170 (VSLE…NLLS), 172-192 (SQLV…IGNL), 193-216 (KRLT…IGGC), 217-241 (ESLV…GMLK), 243-264 (LSQV…ISNC), 265-288 (TSLE…LGDL), 289-312 (QSLE…IGNL), 314-336 (YAIE…LGNI), 337-360 (EGLE…LSTL), 361-383 (KNLS…GFQY), 385-408 (RGLF…LGWY), 409-432 (SDLW…LCLH), 433-456 (SNMI…ITTC), 458-480 (TLVQ…LCKQ), 481-504 (VNVT…VGNC), 505-528 (SALQ…IGML), 529-552 (SQLG…IFNC), 554-576 (MLQR…VGSL), 577-602 (YQLE…NLSR), 604-624 (TELQ…LGSL), 625-649 (TGLQ…LSNL), 651-672 (MLEF…SFAN), and 674-700 (SSLL…SMSS). Asn180 carries N-linked (GlcNAc...) asparagine glycosylation. Residue Asn263 is glycosylated (N-linked (GlcNAc...) asparagine). 2 N-linked (GlcNAc...) asparagine glycosylation sites follow: Asn302 and Asn311. N-linked (GlcNAc...) asparagine glycosylation is present at Asn362. The N-linked (GlcNAc...) asparagine glycan is linked to Asn444. N-linked (GlcNAc...) asparagine glycans are attached at residues Asn482 and Asn503. Residues Asn535, Asn564, Asn588, Asn599, Asn614, Asn632, Asn661, Asn672, Asn680, and Asn695 are each glycosylated (N-linked (GlcNAc...) asparagine). A helical membrane pass occupies residues 738–758 (IIAITAAVIGGVSLMLIALIV). At 759–1102 (YLMRRPVRTV…TEELTQTTTP (344 aa)) the chain is on the cytoplasmic side. 2 positions are modified to phosphothreonine: Thr793 and Thr801. A Protein kinase domain is found at 804–1091 (FDESFVVGRG…ERSEGEQEHL (288 aa)). Residues 810-818 (VGRGACGTV) and Lys832 each bind ATP. Phosphotyrosine is present on residues Tyr882 and Tyr919. Asp932 serves as the catalytic Proton acceptor. A Phosphoserine modification is found at Ser966. 2 positions are modified to phosphotyrosine: Tyr974 and Tyr981. Thr982 is subject to Phosphothreonine.

The protein belongs to the protein kinase superfamily. Ser/Thr protein kinase family.

It is found in the cell membrane. The enzyme catalyses L-seryl-[protein] + ATP = O-phospho-L-seryl-[protein] + ADP + H(+). The catalysed reaction is L-threonyl-[protein] + ATP = O-phospho-L-threonyl-[protein] + ADP + H(+). The sequence is that of Probable leucine-rich repeat receptor-like protein kinase At5g63930 from Arabidopsis thaliana (Mouse-ear cress).